Consider the following 505-residue polypeptide: Alpha-1-syntrophin (505 aa).

2 disordered regions span residues 1 to 25 (MASGRRAPRTGLLELRAGAGSGAGG) and 40 to 77 (LTVSPADGDPGPEPGAPREQEPAQLNGAAEPGAGPPQL). 2 PH domains span residues 6 to 269 (RAPR…AQVN) and 293 to 401 (DIKQ…DGCH). The 84-residue stretch at 87–170 (RVTVRKADAG…EVVLEVKYMK (84 aa)) folds into the PDZ domain. 5 positions are modified to phosphoserine: Ser101, Ser184, Ser189, Ser193, and Ser200. The disordered stretch occupies residues 180 to 210 (TGGTSVGWDSPPASPLQRQPSSPGPTPRNFS). Residues 449-505 (PFEKLQMSSDDGASLLFLDFGGAEGEIQLDLHSCPKTIVFIIHSFLSAKVTRLGLLA) enclose the SU domain. A calmodulin-binding region spans residues 483-505 (PKTIVFIIHSFLSAKVTRLGLLA).

The protein belongs to the syntrophin family. Monomer and homodimer. Interacts with the other members of the syntrophin family SNTB1 and SNTB2; SGCG and SGCA of the dystrophin glycoprotein complex; NOS1; GRB2; the sodium channel proteins SCN4A and SCN5A; F-actin and calmodulin. Interacts with dystrophin protein DMD and related proteins DTNA and UTRN and with MAPK12, TGFA and GA. Interacts with MYOC; regulates muscle hypertrophy. Interacts with DTNB. In terms of processing, phosphorylated by CaM-kinase II. Phosphorylation may inhibit the interaction with DMD. As to expression, high expression in skeletal muscle and heart. Low expression in brain, pancreas, liver, kidney and lung. Not detected in placenta.

It localises to the cell membrane. It is found in the sarcolemma. The protein localises to the cell junction. Its subcellular location is the cytoplasm. The protein resides in the cytoskeleton. Adapter protein that binds to and probably organizes the subcellular localization of a variety of membrane proteins. May link various receptors to the actin cytoskeleton and the extracellular matrix via the dystrophin glycoprotein complex. Plays an important role in synapse formation and in the organization of UTRN and acetylcholine receptors at the neuromuscular synapse. Binds to phosphatidylinositol 4,5-bisphosphate. The chain is Alpha-1-syntrophin (SNTA1) from Homo sapiens (Human).